Reading from the N-terminus, the 266-residue chain is Outer kinetochore KNL1 complex subunit ZWINT (266 aa).

The disordered stretch occupies residues 95 to 115; the sequence is DQNPDALASEDTSRQKATETK. The span at 105 to 115 shows a compositional bias: basic and acidic residues; the sequence is DTSRQKATETK. Positions 136-237 form a coiled coil; sequence LSEALPQVKE…QRNQSYLQLL (102 aa). A phosphoserine mark is found at Ser232 and Ser265.

As to quaternary structure, component of the KNL1 complex composed of KNL1 and ZWINT. Part of the ten-subunit outer kinetochore KMN network that includes the KNL1, MIS12 and NDC80 complexes; a bioriented kinetochore contains approximately 150 copies of the network. Interacts with the MIS12 complex subunits MIS12 DSN1, and PMF1. Interacts with the NDC80 complex subunit NDC80 during mitosis. Interacts with ZW10. Interacts with CETN3. Expressed abundantly in brain and at lower levels in testis and kidney.

The protein localises to the nucleus. The protein resides in the chromosome. It localises to the centromere. Its subcellular location is the kinetochore. In terms of biological role, acts as a component of the outer kinetochore KNL1 complex that serves as a docking point for spindle assembly checkpoint components and mediates microtubule-kinetochore interactions. Kinetochores, consisting of a centromere-associated inner segment and a microtubule-contacting outer segment, play a crucial role in chromosome segregation by mediating the physical connection between centromeric DNA and spindle microtubules. The outer kinetochore is made up of the ten-subunit KMN network, comprising the MIS12, NDC80 and KNL1 complexes, and auxiliary microtubule-associated components; together they connect the outer kinetochore with the inner kinetochore, bind microtubules, and mediate interactions with mitotic checkpoint proteins that delay anaphase until chromosomes are bioriented on the spindle. Targets the RZZ complex to the kinetochore at prometaphase. Recruits MAD2L1 to the kinetochore, but is not required for BUB1B localization. In addition to orienting mitotic chromosomes, it is also essential for alignment of homologous chromosomes during meiotic metaphase I. In meiosis I, required to activate the spindle assembly checkpoint at unattached kinetochores to correct erroneous kinetochore-microtubule attachments. The chain is Outer kinetochore KNL1 complex subunit ZWINT (Zwint) from Rattus norvegicus (Rat).